The following is a 783-amino-acid chain: Cation/H(+) antiporter 10 (783 aa).

12 consecutive transmembrane segments (helical) span residues 31-51, 61-81, 100-120, 135-155, 175-195, 206-226, 244-264, 276-295, 300-322, 356-376, 389-409, and 418-438; these read VVFG…FFCI, IGIS…PQLF, IAAL…LMTV, VVIG…QNFF, AIVI…LLEL, ALSA…VASI, AVII…QWVI, MYIH…FVFF, ILGP…ALEA, IFFN…ACLA, LAVS…YEAV, and ATYS…PTVL.

It belongs to the monovalent cation:proton antiporter 2 (CPA2) transporter (TC 2.A.37) family. CHX (TC 2.A.37.4) subfamily. As to expression, specifically expressed in pollen.

It is found in the membrane. In terms of biological role, may operate as a cation/H(+) antiporter. The sequence is that of Cation/H(+) antiporter 10 (CHX10) from Arabidopsis thaliana (Mouse-ear cress).